The primary structure comprises 126 residues: Aspartate 1-decarboxylase (126 aa).

Ser-25 acts as the Schiff-base intermediate with substrate; via pyruvic acid in catalysis. Ser-25 is modified (pyruvic acid (Ser)). Residue Thr-57 participates in substrate binding. Tyr-58 functions as the Proton donor in the catalytic mechanism. 73–75 (GAA) provides a ligand contact to substrate.

This sequence belongs to the PanD family. In terms of assembly, heterooctamer of four alpha and four beta subunits. It depends on pyruvate as a cofactor. Post-translationally, is synthesized initially as an inactive proenzyme, which is activated by self-cleavage at a specific serine bond to produce a beta-subunit with a hydroxyl group at its C-terminus and an alpha-subunit with a pyruvoyl group at its N-terminus.

The protein resides in the cytoplasm. It carries out the reaction L-aspartate + H(+) = beta-alanine + CO2. Its pathway is cofactor biosynthesis; (R)-pantothenate biosynthesis; beta-alanine from L-aspartate: step 1/1. Functionally, catalyzes the pyruvoyl-dependent decarboxylation of aspartate to produce beta-alanine. The chain is Aspartate 1-decarboxylase from Stutzerimonas stutzeri (strain A1501) (Pseudomonas stutzeri).